Consider the following 158-residue polypeptide: Small ribosomal subunit protein uS7 (158 aa).

The protein belongs to the universal ribosomal protein uS7 family. Part of the 30S ribosomal subunit. Contacts proteins S9 and S11.

One of the primary rRNA binding proteins, it binds directly to 16S rRNA where it nucleates assembly of the head domain of the 30S subunit. Is located at the subunit interface close to the decoding center, probably blocks exit of the E-site tRNA. The sequence is that of Small ribosomal subunit protein uS7 from Christiangramia forsetii (strain DSM 17595 / CGMCC 1.15422 / KT0803) (Gramella forsetii).